A 590-amino-acid polypeptide reads, in one-letter code: UvrABC system protein C (590 aa).

Residues glutamate 14–valine 91 form the GIY-YIG domain. The 36-residue stretch at glutamate 196–threonine 231 folds into the UVR domain.

Belongs to the UvrC family. As to quaternary structure, interacts with UvrB in an incision complex.

It is found in the cytoplasm. Its function is as follows. The UvrABC repair system catalyzes the recognition and processing of DNA lesions. UvrC both incises the 5' and 3' sides of the lesion. The N-terminal half is responsible for the 3' incision and the C-terminal half is responsible for the 5' incision. The chain is UvrABC system protein C from Geobacillus kaustophilus (strain HTA426).